We begin with the raw amino-acid sequence, 354 residues long: N-acetyl-gamma-glutamyl-phosphate reductase (354 aa).

C156 is a catalytic residue.

Belongs to the NAGSA dehydrogenase family. Type 1 subfamily.

Its subcellular location is the cytoplasm. The catalysed reaction is N-acetyl-L-glutamate 5-semialdehyde + phosphate + NADP(+) = N-acetyl-L-glutamyl 5-phosphate + NADPH + H(+). Its pathway is amino-acid biosynthesis; L-arginine biosynthesis; N(2)-acetyl-L-ornithine from L-glutamate: step 3/4. Functionally, catalyzes the NADPH-dependent reduction of N-acetyl-5-glutamyl phosphate to yield N-acetyl-L-glutamate 5-semialdehyde. This Bordetella bronchiseptica (strain ATCC BAA-588 / NCTC 13252 / RB50) (Alcaligenes bronchisepticus) protein is N-acetyl-gamma-glutamyl-phosphate reductase.